We begin with the raw amino-acid sequence, 841 residues long: DNA mismatch repair protein MutS (841 aa).

600–607 (GPNMAGKS) lines the ATP pocket.

The protein belongs to the DNA mismatch repair MutS family.

Functionally, this protein is involved in the repair of mismatches in DNA. It is possible that it carries out the mismatch recognition step. This protein has a weak ATPase activity. The sequence is that of DNA mismatch repair protein MutS from Carboxydothermus hydrogenoformans (strain ATCC BAA-161 / DSM 6008 / Z-2901).